The sequence spans 455 residues: Probable circularly permuted 1,3-beta-glucanase TOS1 (455 aa).

The N-terminal stretch at 1-23 (MLQKLSMTALVGLFSSVVSLVNA) is a signal peptide. The interval 158-221 (TADSTNTVVG…SSSSSSNTNG (64 aa)) is disordered. The span at 172-189 (SSYTKDSTVLSSSAQAVE) shows a compositional bias: polar residues. The segment covering 190–219 (TSESQSSISSSKTTSSAAAASSSSSSSSNT) has biased composition (low complexity). Asn236 is a glycosylation site (N-linked (GlcNAc...) asparagine). An ExDxxE motif motif is present at residues 372–377 (EMDLFE). Residue Asn417 is glycosylated (N-linked (GlcNAc...) asparagine).

It belongs to the PGA52 family.

Its subcellular location is the secreted. It is found in the cell wall. It carries out the reaction Hydrolysis of (1-&gt;3)-beta-D-glucosidic linkages in (1-&gt;3)-beta-D-glucans.. Probable circularly permuted 1,3-beta-glucanase involved in cell wall modification through beta-1,3-glucan network alterations such as increased branching or remodeling. The sequence is that of Probable circularly permuted 1,3-beta-glucanase TOS1 from Saccharomyces cerevisiae (strain ATCC 204508 / S288c) (Baker's yeast).